The primary structure comprises 419 residues: Serine/threonine-protein kinase Kist (419 aa).

A Protein kinase domain is found at W23 to F304. Residues L29–V37 and K54 each bind ATP. Residues D141 and D158 each act as proton acceptor in the active site. An RRM domain is found at R324–L406.

Belongs to the protein kinase superfamily. Ser/Thr protein kinase family. As to quaternary structure, interacts with stathmin, PAM and CDKN1B/p27Kip1.

Its subcellular location is the nucleus. The catalysed reaction is L-seryl-[protein] + ATP = O-phospho-L-seryl-[protein] + ADP + H(+). It catalyses the reaction L-threonyl-[protein] + ATP = O-phospho-L-threonyl-[protein] + ADP + H(+). Functionally, upon serum stimulation, phosphorylates CDKN1B/p27Kip1, thus controlling CDKN1B subcellular location and cell cycle progression in G1 phase. May be involved in trafficking and/or processing of RNA. The protein is Serine/threonine-protein kinase Kist (UHMK1) of Pongo abelii (Sumatran orangutan).